An 80-amino-acid chain; its full sequence is Conotoxin VnMSGL-0123 (80 aa).

A signal peptide spans 1-20 (MSGLGIMVLTLLLLVSMATS). Residues 21–44 (HQDGGGKQATQRDAINVRRRRSIT) constitute a propeptide that is removed on maturation. Disulfide bonds link cysteine 53–cysteine 65, cysteine 57–cysteine 74, and cysteine 64–cysteine 78. Phenylalanine 79 carries the post-translational modification Phenylalanine amide.

The protein belongs to the conotoxin O3 superfamily. Expressed by the venom duct.

Its subcellular location is the secreted. In Conus ventricosus (Mediterranean cone), this protein is Conotoxin VnMSGL-0123.